A 408-amino-acid chain; its full sequence is Protein BTN1 (408 aa).

The signal sequence occupies residues 1 to 30; sequence MSDKSHQIYCYFWLFGLINNVLYVVILSAA. 7 helical membrane passes run 42-62, 80-100, 128-148, 150-170, 238-258, 323-343, and 369-389; these read LVLL…PFFI, LGMF…ISFA, SGTG…TSIF, VPVK…LFYF, TVYL…LFPI, WFYV…EGFL, and GAVS…GLGL.

The protein belongs to the battenin family.

It is found in the vacuole membrane. In terms of biological role, plays a role in vacuolar arginine transport. Involved in pH homeostasis. May be involved in ion homeostasis together with IST2. Not necessary for mitochondrial function or ATP synthase degradation. The chain is Protein BTN1 (YHC3) from Saccharomyces cerevisiae (strain ATCC 204508 / S288c) (Baker's yeast).